We begin with the raw amino-acid sequence, 122 residues long: Histone H2B.1 (122 aa).

Over residues 1–10 (MAPKKAPAAA) the composition is skewed to low complexity. Residues 1–28 (MAPKKAPAAAAEKKVKKAPTTEKKNKKK) are disordered. The residue at position 2 (A2) is a N,N,N-trimethylalanine. N6-acetyllysine is present on residues K5 and K42. A Glycyl lysine isopeptide (Lys-Gly) (interchain with G-Cter in ubiquitin) cross-link involves residue K116.

This sequence belongs to the histone H2B family. The nucleosome is a histone octamer containing two molecules each of H2A, H2B, H3 and H4 assembled in one H3-H4 heterotetramer and two H2A-H2B heterodimers. The octamer wraps approximately 147 bp of DNA. In terms of processing, acetylation occurs almost exclusively in the MAC. Monoubiquitination to form H2BK115ub1 gives a specific tag for epigenetic transcriptional activation and is also prerequisite for H3K4me and H3K79me formation.

It is found in the nucleus. The protein localises to the chromosome. Its function is as follows. Core component of nucleosome. Nucleosomes wrap and compact DNA into chromatin, limiting DNA accessibility to the cellular machineries which require DNA as a template. Histones thereby play a central role in transcription regulation, DNA repair, DNA replication and chromosomal stability. DNA accessibility is regulated via a complex set of post-translational modifications of histones, also called histone code, and nucleosome remodeling. The polypeptide is Histone H2B.1 (HTB1) (Tetrahymena thermophila (strain SB210)).